Here is a 464-residue protein sequence, read N- to C-terminus: UDP-N-acetylmuramate--L-alanine ligase (464 aa).

Position 117 to 123 (117 to 123 (GTHGKTT)) interacts with ATP.

The protein belongs to the MurCDEF family.

It is found in the cytoplasm. The catalysed reaction is UDP-N-acetyl-alpha-D-muramate + L-alanine + ATP = UDP-N-acetyl-alpha-D-muramoyl-L-alanine + ADP + phosphate + H(+). It participates in cell wall biogenesis; peptidoglycan biosynthesis. Cell wall formation. In Streptomyces avermitilis (strain ATCC 31267 / DSM 46492 / JCM 5070 / NBRC 14893 / NCIMB 12804 / NRRL 8165 / MA-4680), this protein is UDP-N-acetylmuramate--L-alanine ligase.